A 51-amino-acid chain; its full sequence is Sec-independent protein translocase protein TatA (51 aa).

The chain crosses the membrane as a helical span at residues 1 to 21 (MGMSFSHLLIILLIIFVLFGA).

Belongs to the TatA/E family. The Tat system comprises two distinct complexes: a TatABC complex, containing multiple copies of TatA, TatB and TatC subunits, and a separate TatA complex, containing only TatA subunits. Substrates initially bind to the TatABC complex, which probably triggers association of the separate TatA complex to form the active translocon.

The protein resides in the cell inner membrane. Functionally, part of the twin-arginine translocation (Tat) system that transports large folded proteins containing a characteristic twin-arginine motif in their signal peptide across membranes. TatA could form the protein-conducting channel of the Tat system. In Rickettsia bellii (strain RML369-C), this protein is Sec-independent protein translocase protein TatA.